We begin with the raw amino-acid sequence, 160 residues long: Cyclic pyranopterin monophosphate synthase (160 aa).

Substrate contacts are provided by residues 77–79 and 114–115; these read LCH and ME. The active site involves aspartate 129.

This sequence belongs to the MoaC family. As to quaternary structure, homohexamer; trimer of dimers.

It catalyses the reaction (8S)-3',8-cyclo-7,8-dihydroguanosine 5'-triphosphate = cyclic pyranopterin phosphate + diphosphate. It participates in cofactor biosynthesis; molybdopterin biosynthesis. Its function is as follows. Catalyzes the conversion of (8S)-3',8-cyclo-7,8-dihydroguanosine 5'-triphosphate to cyclic pyranopterin monophosphate (cPMP). The polypeptide is Cyclic pyranopterin monophosphate synthase (Alcanivorax borkumensis (strain ATCC 700651 / DSM 11573 / NCIMB 13689 / SK2)).